The following is a 143-amino-acid chain: Large ribosomal subunit protein uL11 (143 aa).

Belongs to the universal ribosomal protein uL11 family. As to quaternary structure, part of the ribosomal stalk of the 50S ribosomal subunit. Interacts with L10 and the large rRNA to form the base of the stalk. L10 forms an elongated spine to which L12 dimers bind in a sequential fashion forming a multimeric L10(L12)X complex. One or more lysine residues are methylated.

Forms part of the ribosomal stalk which helps the ribosome interact with GTP-bound translation factors. This chain is Large ribosomal subunit protein uL11, found in Psychrobacter cryohalolentis (strain ATCC BAA-1226 / DSM 17306 / VKM B-2378 / K5).